Here is a 440-residue protein sequence, read N- to C-terminus: 3-phosphoshikimate 1-carboxyvinyltransferase (440 aa).

3-phosphoshikimate-binding residues include Lys26, Ser27, and Arg31. Lys26 serves as a coordination point for phosphoenolpyruvate. Positions 99 and 127 each coordinate phosphoenolpyruvate. 3-phosphoshikimate contacts are provided by Ser172, Gln174, Asp320, and Lys347. Phosphoenolpyruvate is bound at residue Gln174. Residue Asp320 is the Proton acceptor of the active site. Arg351 and Arg392 together coordinate phosphoenolpyruvate.

The protein belongs to the EPSP synthase family. As to quaternary structure, monomer.

The protein resides in the cytoplasm. The catalysed reaction is 3-phosphoshikimate + phosphoenolpyruvate = 5-O-(1-carboxyvinyl)-3-phosphoshikimate + phosphate. Its pathway is metabolic intermediate biosynthesis; chorismate biosynthesis; chorismate from D-erythrose 4-phosphate and phosphoenolpyruvate: step 6/7. Functionally, catalyzes the transfer of the enolpyruvyl moiety of phosphoenolpyruvate (PEP) to the 5-hydroxyl of shikimate-3-phosphate (S3P) to produce enolpyruvyl shikimate-3-phosphate and inorganic phosphate. This is 3-phosphoshikimate 1-carboxyvinyltransferase from Xanthomonas euvesicatoria pv. vesicatoria (strain 85-10) (Xanthomonas campestris pv. vesicatoria).